We begin with the raw amino-acid sequence, 404 residues long: CD2 homolog (404 aa).

The N-terminal stretch at 1–16 (MFITLIFLSYINIVLS) is a signal peptide. Over 17 to 225 (NNYWARLNET…QNYFLENIHT (209 aa)) the chain is Extracellular. 10 N-linked (GlcNAc...) asparagine; by host glycosylation sites follow: Asn24, Asn87, Asn92, Asn96, Asn122, Asn139, Asn167, Asn193, Asn200, and Asn206. Cystine bridges form between Cys140–Cys207 and Cys147–Cys190. A helical transmembrane segment spans residues 226–246 (LFYIIIFIVSGLIASIFISII). At 247–404 (TFLSLRKRKK…ISLIHVDRII (158 aa)) the chain is on the cytoplasmic side. The tract at residues 260–295 (EIESPPPESNEEEQCQHDDTTSIHEPSPREPLLPKP) is disordered. The span at 273–287 (QCQHDDTTSIHEPSP) shows a compositional bias: basic and acidic residues. 7 consecutive repeat copies span residues 322–327 (NPCPPP), 328–333 (KPCPPP), 334–339 (KPCPPP), 340–345 (KPCPPP), 346–351 (KPCPPP), 352–357 (KPCPPP), and 358–363 (KPCPPP). The segment at 322–363 (NPCPPPKPCPPPKPCPPPKPCPPPKPCPPPKPCPPPKPCPPP) is 7 X 6 AA tandem repeats of [KN]-P-C-P-P-P. Positions 357 to 388 (PKPCPPPKPCSSPESYSPPKPLPSIPLLPNIP) are enriched in pro residues. The disordered stretch occupies residues 357 to 390 (PKPCPPPKPCSSPESYSPPKPLPSIPLLPNIPPL).

This sequence belongs to the asfivirus CD2 homolog protein family. As to quaternary structure, both glycosylated and nonglycosylated forms interact (via C-terminus) with the host AP-1 complex. In terms of processing, cleaved into two fragments of 63 kDa and 26 kDa containing respectively the glycosylated N-terminus and the nonglycosylated C-terminus. A full-length 89-kDa glycosylated form also exists.

Its subcellular location is the host membrane. The protein localises to the virion membrane. It localises to the host Golgi apparatus. May play an immunosuppressive role by inhibiting lymphocyte proliferation and subsequently facilitating viral replication and generalization of infection. Responsible for viral hemadsorption, which may help viral spread. Increases virus replication in the tick vector at the step of virus uptake or replication in the tick gut. May play a role in the host Golgi reorganization to yield viral factories. May play a role in host cell penetration. In African swine fever virus (isolate Tick/South Africa/Pretoriuskop Pr4/1996) (ASFV), this protein is CD2 homolog.